Here is a 230-residue protein sequence, read N- to C-terminus: D-glycero-alpha-D-manno-heptose 1-phosphate guanylyltransferase (230 aa).

This sequence belongs to the D-alpha-D-heptose-1-P guanylyltransferase family.

It carries out the reaction D-glycero-alpha-D-manno-heptose 1-phosphate + GTP + H(+) = GDP-D-glycero-alpha-D-manno-heptose + diphosphate. It functions in the pathway nucleotide-sugar biosynthesis; GDP-D-glycero-alpha-D-manno-heptose biosynthesis; GDP-D-glycero-alpha-D-manno-heptose from D-glycero-alpha-D-manno-heptose 7-phosphate: step 3/3. It participates in cell surface structure biogenesis; S-layer biogenesis. Functionally, catalyzes the GDP transfer from GTP to D-glycero-alpha-D-manno-heptose 1-phosphate, yielding GDP-D-alpha-D-heptose. Cannot use ATP, CTP, dTTP or UTP as substrate. This Aneurinibacillus thermoaerophilus protein is D-glycero-alpha-D-manno-heptose 1-phosphate guanylyltransferase (hddC).